Reading from the N-terminus, the 440-residue chain is Acyltransferase Pun1 (440 aa).

Active-site proton acceptor residues include histidine 169 and aspartate 384.

The protein belongs to the plant acyltransferase family.

It catalyses the reaction vanillylamine + (6E)-8-methylnon-6-enoyl-CoA = capsaicin + CoA + H(+). The catalysed reaction is (6E)-8-methylnon-6-enoyl-CoA + 4-hydroxy-3-methoxy-benzenemethanol = capsiate + CoA. Involved in the biosynthesis of capsaicinoids and capsinoids natural products, pungent alkaloids synthesized from phenylpropanoid intermediates in the placental tissue of chili pepper fruit acting as repellant on herbivorous mammals and conferring spiciness to hot peppers. Catalyzes the biosynthesis of capsaicin, a pungent component, and of capsiate, a non-pungent component, from vanillylamine and vanillyl alcohol, respectively. Can transfer an acyl from 8-methylnon-6-enoyl-CoA to vanillylamine forming capsaicin and CoA. This chain is Acyltransferase Pun1, found in Capsicum frutescens (Cayenne pepper).